The following is a 1176-amino-acid chain: Leucine--tRNA ligase, cytoplasmic (1176 aa).

Residues Tyr52 and Tyr54 each coordinate L-leucine. A 'HIGH' region motif is present at residues 60–63 (HLGH). The residue at position 167 (Ser167) is a Phosphoserine. The tract at residues 260–509 (GPQEYTLLKL…DAGDALIYME (250 aa)) is editing domain. Leu594 and Ser597 together coordinate L-leucine. A 'KMSKS' region motif is present at residues 716–720 (KMSKS). Lys719 contacts ATP. Phosphoserine is present on Ser720. N6-acetyllysine is present on residues Lys970 and Lys1047.

This sequence belongs to the class-I aminoacyl-tRNA synthetase family. Part of the aminoacyl-tRNA synthetase multienzyme complex, also known as multisynthetase complex (MSC), that is composed of the aminoacyl-tRNA ligases for Arg (RARS1), Asp (DARS1), Gln (QARS1), Ile (IARS1), Leu (LARS1), Lys (KARS1), Met (MARS1) the bifunctional ligase for Glu and Pro (EPRS1) and the auxiliary subunits AIMP1/p43, AIMP2/p38 and EEF1E1/p18.

It localises to the cytoplasm. It catalyses the reaction tRNA(Leu) + L-leucine + ATP = L-leucyl-tRNA(Leu) + AMP + diphosphate. The catalysed reaction is L-methionyl-tRNA(Leu) + H2O = tRNA(Leu) + L-methionine + H(+). With respect to regulation, 5-fluoro-1,3-dihydro-1-hydroxy-1,2-benzoxaborole inhibits LARS1 by forming a covalent adduct with the 3' adenosine of tRNA(Leu) at the editing site, thus locking the enzyme in an inactive conformation. Its function is as follows. Aminoacyl-tRNA synthetase that catalyzes the specific attachment of leucine to its cognate tRNA (tRNA(Leu)). It performs tRNA aminoacylation in a two-step reaction: Leu is initially activated by ATP to form a leucyl-adenylate (Leu-AMP) intermediate; then the leucyl moiety is transferred to the acceptor 3' end of the tRNA to yield leucyl-tRNA. To improve the fidelity of catalytic reactions, it is also able to hydrolyze misactivated aminoacyl-adenylate intermediates (pre-transfer editing) and mischarged aminoacyl-tRNAs (post-transfer editing). This is Leucine--tRNA ligase, cytoplasmic from Homo sapiens (Human).